Reading from the N-terminus, the 615-residue chain is MQNDNKNTLMFIVSAFAILIGYQFFVLGPQQKKAEAEFRAKKAAEQQSAAKAGVTLDANGNPAPLRLSRDAAKALSPRIEVDTPALSGSIALKGARIDDLFLRKYDETTKKDSPPVELFRPEGAEHAWFADFGWAGANLPGLPDSRTVWTAAPGQVLRPNSPVTLTYDNGLGLTFTRVIAVDDQAMFTVTDSVKNNGTNGLQLAPYATVQRQGISDALGKNQIVHEGAIGVLGATDEQKLEMAKYGKWKKDKPLQSFDSVGGWTGITDKYWLAALIPGQNQAIKAQYRVTNVAGIDVYDVNFLGPVQVLNPGATVSQTTRLFAGAKTVPLLRKYEYGATPAPAIWEFWNKTKAEIPRFDDAVDWGMFRFFTRPIFNILEVFYKLVGNFGLAILLLTVVLKLVLYPMADKSYESMAKMKKIAPEVEKLKAKHKDDPAKQQQEMMALYQKEKINPMMGCLPMLIQIPVFYALYKVLTVTIEMRHAPFFGWIQDLSAPDPTTMFNLFGLIPWDPGSLPLIGAMIAHLGVWPLLYGFTMWLTTAMNPPAGDPIQQKIFQWFPVIFTFTLSGFAVGLVIYWCWSNVLTIFQQYIIMRRYKVENPIDQIIARLRGKTAGAT.

5 helical membrane-spanning segments follow: residues 9–29 (LMFIVSAFAILIGYQFFVLGP), 384–404 (LVGNFGLAILLLTVVLKLVLY), 458–478 (LPMLIQIPVFYALYKVLTVTI), 516–536 (LIGAMIAHLGVWPLLYGFTMW), and 556–576 (WFPVIFTFTLSGFAVGLVIYW).

The protein belongs to the OXA1/ALB3/YidC family. Type 1 subfamily. As to quaternary structure, interacts with the Sec translocase complex via SecD. Specifically interacts with transmembrane segments of nascent integral membrane proteins during membrane integration.

The protein localises to the cell inner membrane. Functionally, required for the insertion and/or proper folding and/or complex formation of integral membrane proteins into the membrane. Involved in integration of membrane proteins that insert both dependently and independently of the Sec translocase complex, as well as at least some lipoproteins. Aids folding of multispanning membrane proteins. The polypeptide is Membrane protein insertase YidC (Caulobacter vibrioides (strain ATCC 19089 / CIP 103742 / CB 15) (Caulobacter crescentus)).